Here is an 89-residue protein sequence, read N- to C-terminus: Large ribosomal subunit protein bL27 (89 aa).

The tract at residues 1–21 (MAHKKAGGSSRNGRDSAGRRL) is disordered.

It belongs to the bacterial ribosomal protein bL27 family.

The chain is Large ribosomal subunit protein bL27 from Erythrobacter litoralis (strain HTCC2594).